Reading from the N-terminus, the 185-residue chain is Ribosome-recycling factor (185 aa).

Belongs to the RRF family.

Its subcellular location is the cytoplasm. Responsible for the release of ribosomes from messenger RNA at the termination of protein biosynthesis. May increase the efficiency of translation by recycling ribosomes from one round of translation to another. The chain is Ribosome-recycling factor from Bacillus anthracis (strain CDC 684 / NRRL 3495).